Here is a 103-residue protein sequence, read N- to C-terminus: Small ribosomal subunit protein uS10 (103 aa).

This sequence belongs to the universal ribosomal protein uS10 family. In terms of assembly, part of the 30S ribosomal subunit.

Functionally, involved in the binding of tRNA to the ribosomes. This chain is Small ribosomal subunit protein uS10, found in Syntrophobacter fumaroxidans (strain DSM 10017 / MPOB).